A 1030-amino-acid polypeptide reads, in one-letter code: Calcium-transporting ATPase 4, plasma membrane-type (1030 aa).

Residues 1-157 (MSNLLRDFEV…NRYTEKPARS (157 aa)) lie on the Cytoplasmic side of the membrane. The segment at 19–30 (ARQRWRSSVSIV) is interaction with calmodulin. The residue at position 28 (serine 28) is a Phosphoserine. A helical transmembrane segment spans residues 158–178 (FLMFVWEALHDITLIILMVCA). Residues 179 to 196 (VVSIGVGVATEGFPRGMY) lie on the Lumenal side of the membrane. A helical membrane pass occupies residues 197-217 (DGTGILLSILLVVMVTAISDY). The Cytoplasmic portion of the chain corresponds to 218–345 (KQSLQFRDLD…EDETPLQVKL (128 aa)). The helical transmembrane segment at 346-365 (NGVATIIGKIGLSFAVLTFV) threads the bilayer. The Lumenal segment spans residues 366 to 395 (VLCIRFVLDKATSGSFTNWSSEDALTLLDY). A helical transmembrane segment spans residues 396–413 (FAISVTIIVVAVPEGLPL). Residues 414-804 (AVTLSLAFAM…RWGRAVYINI (391 aa)) lie on the Cytoplasmic side of the membrane. The active-site 4-aspartylphosphate intermediate is aspartate 451. Residues aspartate 749 and aspartate 753 each coordinate Mg(2+). The helical transmembrane segment at 805–823 (QKFVQFQLTVNVVALIINF) threads the bilayer. The Lumenal segment spans residues 824–834 (VSACITGSAPL). Residues 835–855 (TAVQLLWVNMIMDTLGALALA) traverse the membrane as a helical segment. The Cytoplasmic portion of the chain corresponds to 856-875 (TEPPNEGLMKRAPIARTASF). A helical membrane pass occupies residues 876-898 (ITKTMWRNIAGQSVYQLIVLGIL). Over 899–910 (NFAGKSLLKLDG) the chain is Lumenal. Residues 911-932 (PDSTAVLNTVIFNSFVFCQVFN) form a helical membrane-spanning segment. The Cytoplasmic portion of the chain corresponds to 933–950 (EINSREIEKINVFKGMFN). A helical transmembrane segment spans residues 951–972 (SWVFTWVMTVTVVFQVIIVEFL). Residues 973-982 (GAFASTVPLS) are Lumenal-facing. Residues 983-1004 (WQHWLLSILIGSLNMIVAVILK) traverse the membrane as a helical segment. Topologically, residues 1005 to 1030 (CVPVESRHHHDGYDLLPSGPSSSNSA) are cytoplasmic.

This sequence belongs to the cation transport ATPase (P-type) (TC 3.A.3) family. Type IIB subfamily.

The protein localises to the vacuole membrane. The enzyme catalyses Ca(2+)(in) + ATP + H2O = Ca(2+)(out) + ADP + phosphate + H(+). With respect to regulation, activated by calmodulin. Its function is as follows. This magnesium-dependent enzyme catalyzes the hydrolysis of ATP coupled with the translocation of calcium from the cytosol into small vacuoles. The polypeptide is Calcium-transporting ATPase 4, plasma membrane-type (ACA4) (Arabidopsis thaliana (Mouse-ear cress)).